Consider the following 118-residue polypeptide: Ribosome-binding factor A (118 aa).

Belongs to the RbfA family. Monomer. Binds 30S ribosomal subunits, but not 50S ribosomal subunits or 70S ribosomes.

Its subcellular location is the cytoplasm. Functionally, one of several proteins that assist in the late maturation steps of the functional core of the 30S ribosomal subunit. Associates with free 30S ribosomal subunits (but not with 30S subunits that are part of 70S ribosomes or polysomes). Required for efficient processing of 16S rRNA. May interact with the 5'-terminal helix region of 16S rRNA. The protein is Ribosome-binding factor A of Bacillus cereus (strain ATCC 10987 / NRS 248).